A 571-amino-acid chain; its full sequence is Serine/threonine-protein kinase Nek7 (571 aa).

The region spanning 19-277 (YHVVEQVRRG…LRNPSLQPYL (259 aa)) is the Protein kinase domain. ATP contacts are provided by residues 25–33 (VRRGKSSSD) and Lys48. The active-site Proton acceptor is Asp144. Disordered stretches follow at residues 298-321 (SPKD…SREK) and 338-363 (TETG…ETKR). Residues 312-321 (FGKERVSREK) show a composition bias toward basic and acidic residues. Low complexity predominate over residues 342–351 (SSSSSQPASS).

Belongs to the protein kinase superfamily. NEK Ser/Thr protein kinase family. NIMA subfamily.

The catalysed reaction is L-seryl-[protein] + ATP = O-phospho-L-seryl-[protein] + ADP + H(+). It carries out the reaction L-threonyl-[protein] + ATP = O-phospho-L-threonyl-[protein] + ADP + H(+). Functionally, may be involved in plant development processes. This Arabidopsis thaliana (Mouse-ear cress) protein is Serine/threonine-protein kinase Nek7 (NEK7).